A 181-amino-acid chain; its full sequence is Major urinary protein 20 (181 aa).

An N-terminal signal peptide occupies residues 1–19; the sequence is MKLLVLLLCLGLTLVCVHA. An intrachain disulfide couples cysteine 83 to cysteine 176.

The protein belongs to the calycin superfamily. Lipocalin family. In terms of tissue distribution, detected in urine of males but absent from female urine (at protein level).

It localises to the secreted. Functionally, male pheromone which stimulates female sexual attraction to male urinary scent and promotes a strong learned attraction to the airborne urinary odor of an individual male. Promotes spatial learning by rapidly conditioning preference for its remembered location among females and competitor males so that animals prefer to spend time in the site even when scent is absent. In addition to promoting a rapid attraction response, also elicits ultrasonic vocalizations and urinary scent marking in females which do not occur immediately after exposure. Stimulates hippocampal neurogenesis and cell proliferation in the subventricular zone in females. Promotes male aggressive behavior. Response to Mup20 is mediated by a neural circuit extending from the accessory olfactory bulb to a subset of nitric oxidase synthase-expressing neurons in the medial amygdala. As well as acting as a pheromone itself, binds most of the male pheromone, 2-sec-butyl-4,5-dihydrothiazole, in urine and is responsible for its slow release from scent marks. The chain is Major urinary protein 20 from Mus musculus (Mouse).